Reading from the N-terminus, the 834-residue chain is Mannosyl-oligosaccharide glucosidase (834 aa).

Basic residues predominate over residues 1–10; the sequence is MARGERRRRA. The interval 1-37 is disordered; that stretch reads MARGERRRRAAAAEGARPLERARAAGRRDGRAGGARG. The Cytoplasmic segment spans residues 1–43; sequence MARGERRRRAAAAEGARPLERARAAGRRDGRAGGARGSASGAA. The Endoplasmic reticulum targeting signature appears at 3 to 9; the sequence is RGERRRR. Positions 17–31 are enriched in basic and acidic residues; that stretch reads RPLERARAAGRRDGR. Residues 44–64 form a helical; Signal-anchor for type II membrane protein membrane-spanning segment; sequence LAVVVLALAFGLSGRWVLAWL. Residues 65 to 834 are Lumenal-facing; it reads RVRRALTLHP…LVLLIMAEEY (770 aa). The interval 74–136 is required for endoplasmic reticulum targeting; that stretch reads PAPSALPPDS…GTPPKLRHTC (63 aa). Catalysis depends on D580, which acts as the Proton donor. N654 carries N-linked (GlcNAc...) asparagine glycosylation. E804 acts as the Proton acceptor in catalysis.

It belongs to the glycosyl hydrolase 63 family.

Its subcellular location is the endoplasmic reticulum membrane. It catalyses the reaction N(4)-(alpha-D-Glc-(1-&gt;2)-alpha-D-Glc-(1-&gt;3)-alpha-D-Glc-(1-&gt;3)-alpha-D-Man-(1-&gt;2)-alpha-D-Man-(1-&gt;2)-alpha-D-Man-(1-&gt;3)-[alpha-D-Man-(1-&gt;2)-alpha-D-Man-(1-&gt;3)-[alpha-D-Man-(1-&gt;2)-alpha-D-Man-(1-&gt;6)]-alpha-D-Man-(1-&gt;6)]-beta-D-Man-(1-&gt;4)-beta-D-GlcNAc-(1-&gt;4)-beta-D-GlcNAc)-L-asparaginyl-[protein] + H2O = N(4)-(alpha-D-Glc-(1-&gt;3)-alpha-D-Glc-(1-&gt;3)-alpha-D-Man-(1-&gt;2)-alpha-D-Man-(1-&gt;2)-alpha-D-Man-(1-&gt;3)-[alpha-D-Man-(1-&gt;2)-alpha-D-Man-(1-&gt;3)-[alpha-D-Man-(1-&gt;2)-alpha-D-Man-(1-&gt;6)]-alpha-D-Man-(1-&gt;6)]-beta-D-Man-(1-&gt;4)-beta-D-GlcNAc-(1-&gt;4)-beta-D-GlcNAc)-L-asparaginyl-[protein] + beta-D-glucose. The protein operates within glycan metabolism; N-glycan degradation. Inhibited by the deoxynojirimycin derivative N-9'-Methoxynonyl-1-Deoxynojirimycin. In the context of N-glycan degradation, cleaves the distal alpha 1,2-linked glucose residue from the Glc(3)Man(9)GlcNAc(2) oligosaccharide precursor in a highly specific manner. In terms of biological role, (Microbial infection) Required for successful influenza or dengue virus infection; inhibition of its activity by a deoxynojirimycin derivative prevents death in mice infected with lethal doses of influenza or dengue viruses, even when administrated after infection. This is Mannosyl-oligosaccharide glucosidase from Mus musculus (Mouse).